Here is a 240-residue protein sequence, read N- to C-terminus: uncharacterized protein (240 aa).

The tract at residues 26-52 is disordered; sequence DYVDDGESLPTRQSVKNQREQKKKQGK. The helical transmembrane segment at 57-77 threads the bilayer; that stretch reads LFTVLAVIFVFVPVIVLVTLF. Positions 100–185 are disordered; it reads KYEVVPKSED…QPAEPVQNVP (86 aa). The segment covering 103 to 159 has biased composition (basic and acidic residues); that stretch reads VVPKSEDKNDTADTKETALQKESKKEPEDSKPKEQTAADKKQTAVAEKEDSPNKEEA. The span at 160 to 185 shows a compositional bias: low complexity; sequence TAAAASSSQSTVQQQEQPAEPVQNVP. One can recognise a LysM domain in the interval 189 to 235; it reads VKHTVQKKETLYRISMKYYKSRTGEEKIRAYNHLNGNDVYTGQVLDI.

It is found in the membrane. This is an uncharacterized protein from Bacillus subtilis (strain 168).